The primary structure comprises 1071 residues: Carbamoyl phosphate synthase large chain (1071 aa).

The tract at residues 1–403 (MPKRTDLKSI…SFQKALRGLE (403 aa)) is carboxyphosphate synthetic domain. An ATP-grasp 1 domain is found at 133–328 (KEAMEKIGLS…IAKVAANWAV (196 aa)). Residues R169, G175, G176, Q208, V210, E215, G241, V242, H243, Q285, and E299 each contribute to the ATP site. Mg(2+) contacts are provided by Q285, E299, and N301. Mn(2+) is bound by residues Q285, E299, and N301. The tract at residues 404–548 (TGLCGFNPAR…YSTYEEECES (145 aa)) is oligomerization domain. The interval 549–930 (RPSDRKKVMI…AYYKAQLGAG (382 aa)) is carbamoyl phosphate synthetic domain. An ATP-grasp 2 domain is found at 673 to 864 (QKVLNDLGLR…LAKVGARCMA (192 aa)). 10 residues coordinate ATP: R709, F748, L750, E755, G780, I781, H782, S783, Q823, and E835. Residues Q823, E835, and N837 each contribute to the Mg(2+) site. Q823, E835, and N837 together coordinate Mn(2+). One can recognise an MGS-like domain in the interval 931–1071 (ERLNPTGKIF…ELHGRLKNRN (141 aa)). Residues 931-1071 (ERLNPTGKIF…ELHGRLKNRN (141 aa)) are allosteric domain.

This sequence belongs to the CarB family. Composed of two chains; the small (or glutamine) chain promotes the hydrolysis of glutamine to ammonia, which is used by the large (or ammonia) chain to synthesize carbamoyl phosphate. Tetramer of heterodimers (alpha,beta)4. The cofactor is Mg(2+). It depends on Mn(2+) as a cofactor.

The enzyme catalyses hydrogencarbonate + L-glutamine + 2 ATP + H2O = carbamoyl phosphate + L-glutamate + 2 ADP + phosphate + 2 H(+). It catalyses the reaction hydrogencarbonate + NH4(+) + 2 ATP = carbamoyl phosphate + 2 ADP + phosphate + 2 H(+). It participates in amino-acid biosynthesis; L-arginine biosynthesis; carbamoyl phosphate from bicarbonate: step 1/1. It functions in the pathway pyrimidine metabolism; UMP biosynthesis via de novo pathway; (S)-dihydroorotate from bicarbonate: step 1/3. Large subunit of the glutamine-dependent carbamoyl phosphate synthetase (CPSase). CPSase catalyzes the formation of carbamoyl phosphate from the ammonia moiety of glutamine, carbonate, and phosphate donated by ATP, constituting the first step of 2 biosynthetic pathways, one leading to arginine and/or urea and the other to pyrimidine nucleotides. The large subunit (synthetase) binds the substrates ammonia (free or transferred from glutamine from the small subunit), hydrogencarbonate and ATP and carries out an ATP-coupled ligase reaction, activating hydrogencarbonate by forming carboxy phosphate which reacts with ammonia to form carbamoyl phosphate. This chain is Carbamoyl phosphate synthase large chain, found in Neisseria gonorrhoeae.